The following is a 515-amino-acid chain: MATTLNPSEISELIKTRIEQVKLSAESRNEGTVTSVSDGIVRIFGLADAMQGEMIELPNKTYALALNLERDSVGAVVLGDYEHLREGDIAKTTGRILEVPVGKSLLGRVVNALGEPIDGKGALGPTQTAPVERVAPGVIWRKSVNQPVQTGYKSVDAMIPIGRGQRELIIGDRQTGKTAMAIDTVISQKDTGIKCVYVAIGQKASTIANIVRKLEENDALDHTIVVAATASESAALQYISAYAGCTMGEYFMDRGEDALIIYDDLSKQAVAYRQISLLLKRPPGREAYPGDVFYLHSRLLERAARVSEEYVEKFTQGEVKGKTGSLTALPIIETQAGDVSAFVPTNVISITDGQIFLETDLFNAGIRPAVNAGISVSRVGGSAQTKIIKKLSGGIRISLAQYRELAAFAQFASDLDETTRKQLERGQRVTELMKQKQYTSMSVANQALSIYAVNEGYLDDVPVDKVLTFEESLHAHFSNTQSALIDKINTSGDWDNNIEAAFKKHIEEFKTTGSW.

ATP is bound at residue 171-178; sequence GDRQTGKT.

The protein belongs to the ATPase alpha/beta chains family. F-type ATPases have 2 components, CF(1) - the catalytic core - and CF(0) - the membrane proton channel. CF(1) has five subunits: alpha(3), beta(3), gamma(1), delta(1), epsilon(1). CF(0) has three main subunits: a(1), b(2) and c(9-12). The alpha and beta chains form an alternating ring which encloses part of the gamma chain. CF(1) is attached to CF(0) by a central stalk formed by the gamma and epsilon chains, while a peripheral stalk is formed by the delta and b chains.

The protein resides in the cell inner membrane. The enzyme catalyses ATP + H2O + 4 H(+)(in) = ADP + phosphate + 5 H(+)(out). Its function is as follows. Produces ATP from ADP in the presence of a proton gradient across the membrane. The alpha chain is a regulatory subunit. This chain is ATP synthase subunit alpha, found in Xylella fastidiosa (strain 9a5c).